Here is a 126-residue protein sequence, read N- to C-terminus: Larval cuticle protein 2 (126 aa).

Positions 1–16 are cleaved as a signal peptide; that stretch reads MFKFVMVFAVLGLAAA. Positions 39 to 100 constitute a Chitin-binding type R&amp;R domain; it reads ADGFDTDLVV…PVGAVLPTPP (62 aa).

Its function is as follows. Component of the larval cuticle. This is Larval cuticle protein 2 (Lcp2) from Drosophila miranda (Fruit fly).